The chain runs to 354 residues: Rhodopsin (354 aa).

Over methionine 1–alanine 36 the chain is Extracellular. 2 N-linked (GlcNAc...) asparagine glycosylation sites follow: asparagine 2 and asparagine 15. Residues tyrosine 37–valine 61 traverse the membrane as a helical segment. The Cytoplasmic segment spans residues threonine 62 to asparagine 73. A helical membrane pass occupies residues tyrosine 74–tyrosine 96. At threonine 97–cysteine 110 the chain is on the extracellular side. Cysteines 110 and 187 form a disulfide. Residues asparagine 111–phenylalanine 133 form a helical membrane-spanning segment. The short motif at glutamate 134–tryptophan 136 is the 'Ionic lock' involved in activated form stabilization element. Residues glutamate 134 to histidine 152 lie on the Cytoplasmic side of the membrane. A helical membrane pass occupies residues alanine 153–valine 173. The Extracellular segment spans residues glycine 174–serine 202. The chain crosses the membrane as a helical span at residues phenylalanine 203 to glycine 224. The Cytoplasmic segment spans residues arginine 225 to arginine 252. A helical membrane pass occupies residues methionine 253–tyrosine 274. At isoleucine 275–valine 286 the chain is on the extracellular side. A helical transmembrane segment spans residues phenylalanine 287–cysteine 308. Lysine 296 is modified (N6-(retinylidene)lysine). Topologically, residues methionine 309–alanine 354 are cytoplasmic. S-palmitoyl cysteine attachment occurs at residues cysteine 322 and cysteine 323. The interval glycine 333–alanine 354 is disordered. Positions alanine 334–alanine 354 are enriched in low complexity.

This sequence belongs to the G-protein coupled receptor 1 family. Opsin subfamily. Post-translationally, phosphorylated on some or all of the serine and threonine residues present in the C-terminal region. Contains one covalently linked retinal chromophore.

It is found in the membrane. The protein resides in the cell projection. Its subcellular location is the cilium. The protein localises to the photoreceptor outer segment. In terms of biological role, photoreceptor required for image-forming vision at low light intensity. While most salt water fish species use retinal as chromophore, most freshwater fish use 3-dehydroretinal, or a mixture of retinal and 3-dehydroretinal. Light-induced isomerization of 11-cis to all-trans retinal triggers a conformational change that activates signaling via G-proteins. Subsequent receptor phosphorylation mediates displacement of the bound G-protein alpha subunit by arrestin and terminates signaling. The protein is Rhodopsin (rho) of Cyprinus carpio (Common carp).